Here is a 489-residue protein sequence, read N- to C-terminus: UDP-N-acetylmuramoyl-L-alanyl-D-glutamate--2,6-diaminopimelate ligase (489 aa).

Residue S30 participates in UDP-N-acetyl-alpha-D-muramoyl-L-alanyl-D-glutamate binding. An ATP-binding site is contributed by 108–114; sequence GTNGKTT. UDP-N-acetyl-alpha-D-muramoyl-L-alanyl-D-glutamate-binding positions include N149, 150–151, S177, Q183, and R185; that span reads TT. Position 217 is an N6-carboxylysine (K217). Meso-2,6-diaminopimelate is bound by residues R383, 407 to 410, G459, and E463; that span reads DNPR. The Meso-diaminopimelate recognition motif motif lies at 407–410; it reads DNPR.

This sequence belongs to the MurCDEF family. MurE subfamily. It depends on Mg(2+) as a cofactor. Carboxylation is probably crucial for Mg(2+) binding and, consequently, for the gamma-phosphate positioning of ATP.

It is found in the cytoplasm. The catalysed reaction is UDP-N-acetyl-alpha-D-muramoyl-L-alanyl-D-glutamate + meso-2,6-diaminopimelate + ATP = UDP-N-acetyl-alpha-D-muramoyl-L-alanyl-gamma-D-glutamyl-meso-2,6-diaminopimelate + ADP + phosphate + H(+). The protein operates within cell wall biogenesis; peptidoglycan biosynthesis. Functionally, catalyzes the addition of meso-diaminopimelic acid to the nucleotide precursor UDP-N-acetylmuramoyl-L-alanyl-D-glutamate (UMAG) in the biosynthesis of bacterial cell-wall peptidoglycan. The protein is UDP-N-acetylmuramoyl-L-alanyl-D-glutamate--2,6-diaminopimelate ligase of Geobacillus kaustophilus (strain HTA426).